The chain runs to 161 residues: pEARLI1-like lipid transfer protein 1 (161 aa).

Positions 1–25 (MASKNSASLALFFALNILFFTLTVA) are cleaved as a signal peptide. The stretch at 32-39 (PSPKPKPV) is one A-1 repeat. The disordered stretch occupies residues 32–76 (PSPKPKPVPSPKPKPVQCPPPPRPSVPSPNPRPVTPPRTPGSSGN). The segment covering 33 to 70 (SPKPKPVPSPKPKPVQCPPPPRPSVPSPNPRPVTPPRT) has biased composition (pro residues). A 2 X 8 AA tandem repeats A of P-S-P-K-P-K-P-V region spans residues 34-49 (PKPKPVPSPKPKPVQC). The A-2 repeat unit spans residues 40–47 (PSPKPKPV).

Belongs to the plant LTP family. PEARLI1 subfamily. Self-interacts and binds to DIR1. Interacts with PDLP1.

The protein resides in the secreted. Its subcellular location is the cell wall. The protein localises to the endoplasmic reticulum. It localises to the cell junction. It is found in the plasmodesma. The protein resides in the plastid. Its subcellular location is the chloroplast. Its function is as follows. Probable lipid transfer protein (LTP). Seems to control the flowering process and lignin synthesis. Together with DIR1, required for glycerol-3-phosphate- (G3P) and azelaic acid- (AA) induced systemic acquired resistance (SAR). Component of plant systemic immunity involved in priming defenses in a AA-dependent manner, by modulating production and/or translocation of a mobile signal(s) during SAR. Confers resistance to Botrytis cinerea and Pseudomonas syringae pv. tomato DC3000 and PmaDG3. May be involved in induced systemic resistance (ISR) mediated by non-pathogenic bacteria (e.g. P. fluorescens GM30). Prevents electrolyte leakage during freezing damage. This Arabidopsis thaliana (Mouse-ear cress) protein is pEARLI1-like lipid transfer protein 1 (AZI1).